Reading from the N-terminus, the 111-residue chain is Large ribosomal subunit protein bL21 (111 aa).

This sequence belongs to the bacterial ribosomal protein bL21 family. In terms of assembly, part of the 50S ribosomal subunit. Contacts protein L20.

In terms of biological role, this protein binds to 23S rRNA in the presence of protein L20. This Thermosynechococcus vestitus (strain NIES-2133 / IAM M-273 / BP-1) protein is Large ribosomal subunit protein bL21.